Reading from the N-terminus, the 471-residue chain is UDP-N-acetylmuramate--L-alanine ligase (471 aa).

Residue 114-120 (GTHGKTT) participates in ATP binding.

This sequence belongs to the MurCDEF family.

It is found in the cytoplasm. It catalyses the reaction UDP-N-acetyl-alpha-D-muramate + L-alanine + ATP = UDP-N-acetyl-alpha-D-muramoyl-L-alanine + ADP + phosphate + H(+). Its pathway is cell wall biogenesis; peptidoglycan biosynthesis. Functionally, cell wall formation. This chain is UDP-N-acetylmuramate--L-alanine ligase, found in Methylobacterium nodulans (strain LMG 21967 / CNCM I-2342 / ORS 2060).